A 329-amino-acid chain; its full sequence is Quinone oxidoreductase (329 aa).

Position 2 is an N-acetylalanine (alanine 2). Position 23 is an N6-acetyllysine (lysine 23). Residues tyrosine 53, 158–161 (SGGV), glycine 181, histidine 200, asparagine 229, 246–249 (VGSR), and 269–271 (VAL) each bind NADP(+). Phosphoserine is present on serine 248.

This sequence belongs to the zinc-containing alcohol dehydrogenase family. Quinone oxidoreductase subfamily. As to quaternary structure, homotetramer.

The protein localises to the cytoplasm. It carries out the reaction 2 a quinone + NADPH + H(+) = 2 a 1,4-benzosemiquinone + NADP(+). Functionally, does not have alcohol dehydrogenase activity. Binds NADP and acts through a one-electron transfer process. Orthoquinones, such as 1,2-naphthoquinone or 9,10-phenanthrenequinone, are the best substrates (in vitro). May act in the detoxification of xenobiotics. Interacts with (AU)-rich elements (ARE) in the 3'-UTR of target mRNA species and enhances their stability. NADPH binding interferes with mRNA binding. This is Quinone oxidoreductase (CRYZ) from Sus scrofa (Pig).